Consider the following 335-residue polypeptide: Transcriptional adapter 1 (335 aa).

Belongs to the TADA1 family. In terms of assembly, component of the STAGA transcription coactivator-HAT complex, at least composed of SUPT3H, GCN5L2, TAF5L, TAF6L, SUPT7L, TADA3L, TAD1L, TAF10, TAF12, TRRAP and TAF9.

The protein localises to the nucleus. Its function is as follows. Probably involved in transcriptional regulation. This chain is Transcriptional adapter 1 (TADA1), found in Bos taurus (Bovine).